A 131-amino-acid chain; its full sequence is Cystatin-like cysteine protease inhibitor EPIC3 (131 aa).

A signal peptide spans 1-22 (MAFTRSIALFAGLALAASSAQG). N-linked (GlcNAc...) asparagine glycosylation is present at Asn-33. The short motif at 71 to 75 (QTVAG) is the Secondary area of contact element.

The protein belongs to the cystatin family.

The protein resides in the secreted. Secreted effector that interacts with and inhibits host apoplastic pathogenesis-related papain-like cysteine proteases. Inhibition of host proteases by a pathogen extracellular protease inhibitor forms a specific type of defense-counterdefense mechanism between plants and microbial pathogens. This is Cystatin-like cysteine protease inhibitor EPIC3 from Phytophthora infestans (strain T30-4) (Potato late blight agent).